Consider the following 332-residue polypeptide: Cytoskeleton protein RodZ (332 aa).

Over 1-111 (MNTETTQDTT…LKKSRKKRDG (111 aa)) the chain is Cytoplasmic. Residues 19 to 71 (LREARERLGLTQQTIAERLCLKITTVRDIEDGTTPADLAPTFLRGYIRSYAKL) form the HTH cro/C1-type domain. Positions 30-49 (QQTIAERLCLKITTVRDIED) form a DNA-binding region, H-T-H motif. Residues 112-132 (WLMIITWLVVLVVLGLTGAWW) traverse the membrane as a helical; Signal-anchor for type II membrane protein segment. Residues 133–332 (WQNHQAQQAE…QVARLTLTAE (200 aa)) are Periplasmic-facing. A disordered region spans residues 149–225 (HASSMQSQTE…PSQANATQSQ (77 aa)). Polar residues-rich tracts occupy residues 151-160 (SSMQSQTEGQ) and 168-182 (SAPQETSTAGSAATP). Positions 190 to 225 (SATIAATPSTPPSSTTASSAAPSSQSPSQANATQSQ) are enriched in low complexity.

The protein belongs to the RodZ family.

Its subcellular location is the cell inner membrane. Functionally, cytoskeletal protein that is involved in cell-shape control through regulation of the length of the long axis. The polypeptide is Cytoskeleton protein RodZ (Pectobacterium atrosepticum (strain SCRI 1043 / ATCC BAA-672) (Erwinia carotovora subsp. atroseptica)).